Here is a 245-residue protein sequence, read N- to C-terminus: Eukaryotic translation initiation factor 6-2 (245 aa).

This sequence belongs to the eIF-6 family. In terms of assembly, monomer. Associates with the 60S ribosomal subunit.

Its subcellular location is the cytoplasm. The protein localises to the nucleus. It localises to the nucleolus. Functionally, binds to the 60S ribosomal subunit and prevents its association with the 40S ribosomal subunit to form the 80S initiation complex in the cytoplasm. May also be involved in ribosome biogenesis. This Arabidopsis thaliana (Mouse-ear cress) protein is Eukaryotic translation initiation factor 6-2.